Reading from the N-terminus, the 481-residue chain is Deoxyribodipyrimidine photo-lyase (481 aa).

In terms of domain architecture, Photolyase/cryptochrome alpha/beta spans 1 to 136; it reads MQLFWHRRDL…AHAQFHDAVH (136 aa). FAD is bound at residue Y228. A DNA-binding site is contributed by R232. 240–244 lines the FAD pocket; it reads TSRLS. Interaction with DNA stretches follow at residues 283-290 and 349-350; these read QLAWREFY and NR. An FAD-binding site is contributed by 380–382; the sequence is DHD. Residue Q412 participates in DNA binding.

The protein belongs to the DNA photolyase class-1 family. Monomer. The cofactor is FAD. Requires coenzyme F420-(gamma-Glu)n as cofactor.

The catalysed reaction is cyclobutadipyrimidine (in DNA) = 2 pyrimidine residues (in DNA).. Involved in repair of UV radiation-induced DNA damage. Catalyzes the light-dependent monomerization (300-600 nm) of cyclobutyl pyrimidine dimers (in cis-syn configuration), which are formed between adjacent bases on the same DNA strand upon exposure to ultraviolet radiation. This Halobacterium salinarum (strain ATCC 700922 / JCM 11081 / NRC-1) (Halobacterium halobium) protein is Deoxyribodipyrimidine photo-lyase (phr).